Reading from the N-terminus, the 554-residue chain is Formate--tetrahydrofolate ligase (554 aa).

Threonine 63–threonine 70 lines the ATP pocket.

This sequence belongs to the formate--tetrahydrofolate ligase family.

The enzyme catalyses (6S)-5,6,7,8-tetrahydrofolate + formate + ATP = (6R)-10-formyltetrahydrofolate + ADP + phosphate. It functions in the pathway one-carbon metabolism; tetrahydrofolate interconversion. In Halothermothrix orenii (strain H 168 / OCM 544 / DSM 9562), this protein is Formate--tetrahydrofolate ligase.